The following is a 90-amino-acid chain: uncharacterized protein (90 aa).

The signal sequence occupies residues 1 to 21 (MFKFSIPLLLFIFLFFSCINS). Residues 56 to 90 (SNEKLPERILSGSSGSCSSCSISSSNGSSSRSSKQ) are disordered. Residues 66–90 (SGSSGSCSSCSISSSNGSSSRSSKQ) are compositionally biased toward low complexity. N-linked (GlcNAc...) asparagine glycosylation is present at Asn81.

This is an uncharacterized protein from Dictyostelium discoideum (Social amoeba).